The chain runs to 33 residues: rho operon leader peptide (33 aa).

Residues 1 to 25 (MRSEQISGSSLNPSCRFSSAYSPVT) are compositionally biased toward polar residues. Residues 1–33 (MRSEQISGSSLNPSCRFSSAYSPVTRQRKDMSR) form a disordered region.

This chain is rho operon leader peptide (rhoL), found in Escherichia coli O157:H7.